Here is a 278-residue protein sequence, read N- to C-terminus: ADP-dependent (S)-NAD(P)H-hydrate dehydratase (278 aa).

In terms of domain architecture, YjeF C-terminal spans 4 to 276; it reads DDDLVRQVIR…KAIPSWMKKL (273 aa). Positions 39, 102, and 152 each coordinate (6S)-NADPHX. Gly-216 lines the AMP pocket. Asp-217 lines the (6S)-NADPHX pocket.

It belongs to the NnrD/CARKD family. As to quaternary structure, homotetramer. The cofactor is Mg(2+).

It catalyses the reaction (6S)-NADHX + ADP = AMP + phosphate + NADH + H(+). The catalysed reaction is (6S)-NADPHX + ADP = AMP + phosphate + NADPH + H(+). In terms of biological role, catalyzes the dehydration of the S-form of NAD(P)HX at the expense of ADP, which is converted to AMP. Together with NAD(P)HX epimerase, which catalyzes the epimerization of the S- and R-forms, the enzyme allows the repair of both epimers of NAD(P)HX, a damaged form of NAD(P)H that is a result of enzymatic or heat-dependent hydration. The protein is ADP-dependent (S)-NAD(P)H-hydrate dehydratase of Streptococcus thermophilus.